Reading from the N-terminus, the 273-residue chain is Dermonecrotic toxin LsaSicTox-alphaIB1aii (273 aa).

The active site involves His-5. Glu-25 and Asp-27 together coordinate Mg(2+). The active-site Nucleophile is the His-41. Cystine bridges form between Cys-45–Cys-51 and Cys-47–Cys-190. Asp-85 is a Mg(2+) binding site.

It belongs to the arthropod phospholipase D family. Class II subfamily. Requires Mg(2+) as cofactor. As to expression, expressed by the venom gland.

The protein resides in the secreted. It carries out the reaction an N-(acyl)-sphingosylphosphocholine = an N-(acyl)-sphingosyl-1,3-cyclic phosphate + choline. It catalyses the reaction an N-(acyl)-sphingosylphosphoethanolamine = an N-(acyl)-sphingosyl-1,3-cyclic phosphate + ethanolamine. The catalysed reaction is a 1-acyl-sn-glycero-3-phosphocholine = a 1-acyl-sn-glycero-2,3-cyclic phosphate + choline. The enzyme catalyses a 1-acyl-sn-glycero-3-phosphoethanolamine = a 1-acyl-sn-glycero-2,3-cyclic phosphate + ethanolamine. Dermonecrotic toxins cleave the phosphodiester linkage between the phosphate and headgroup of certain phospholipids (sphingolipid and lysolipid substrates), forming an alcohol (often choline) and a cyclic phosphate. This toxin acts on sphingomyelin (SM). It may also act on ceramide phosphoethanolamine (CPE), lysophosphatidylcholine (LPC) and lysophosphatidylethanolamine (LPE), but not on lysophosphatidylserine (LPS), and lysophosphatidylglycerol (LPG). It acts by transphosphatidylation, releasing exclusively cyclic phosphate products as second products. Induces dermonecrosis, hemolysis, increased vascular permeability, edema, inflammatory response, and platelet aggregation. The chain is Dermonecrotic toxin LsaSicTox-alphaIB1aii from Loxosceles sabina (Tucson recluse spider).